Here is a 1311-residue protein sequence, read N- to C-terminus: MVGGLPNSSLWNIEYDDLVFKDIIGKGNFGCVYRGNYLGVEVAIKQIPSFDDPDYCKYTEREVKALRYIRHPFVVHFFGACKHESGFYLITEFIEGLDLRRYLKSVPKPPKWLSRVNIALGVAKTFLFLHSKNLLHRDLKSKNILLDISRNQIKLCDFGFARVGSQYSNGSDSSSSEDESDSECVNGAAGGGGDDVYKNNGNGKPANYRLRRMSICGTPSFMPPEILLQQKYDWSVDVFSFGILCTELITLKRPGKDYWVRSQNNGFDINIEELNVNIPSPNDCPIQFYDLALKCCSYKHTNRPMFSTIVTILESIKLQLELFENQQQQQQLQQQQQLQQQQQQQQQQQQQQQQQLQLQQQQSSESSSSSSSQPLVNNNNNNSNCNNNNFNNSSNNNNSIANNDSISNVSTTTTSIPTTTTTTTTTTTTTNNITAINGTSNKYLQPLSKHQQQQQRNQNSSIIDNNSLIGSSNTESMITSFSISTFKERKKQSLNKLIRANTINILIGQQQQQQQQQQQQQQQQQDNQSSSQNQLIEREGVIKLDTTKYPNGWKEFGIDNSTNKIWIIYQSNIIKIGSNNNNNLIEMTCGTIIKLKKHSITLSIVDSNLISGANIINVKSYLKDYPYVNKPIKVNQQQQQQQQIITNNYELNLIIKLQSRIRGWLVRRRYKIFLSNWKLNNSNTSQSNKNQWIRLFNQLISSELEYKKQLDQVIKSYLLPIQSKFRINKPLLNYKEIGSIFSNIESLSEIHNELLKIVNQISKSPFFIMNFENEKDDRSNQNNTSATTDIFGDSSIQFTNISINTKDSSNQINSITQFIVKNISQIKNQYGIYAFNFKYSTNIYNWCRLNPDFSIFCDTIRSQLNQQFPDQENDLASLLSLPINKIQKYLLVFEKLAQITPITHSEYKDIKSAFTLIRETSNYIQSQLEMSFEHSHIMSIDIMLQKKDNQSLMQSGRWFIRQGQFTELSSNKQYYLFLLSDICLITKPIKSKSSKYNNNNNINTNNNNNNLTSSATQTNSNKDLSTSINQSTSNANSDNSGNNNNNLINSKYYYRLKTIINLKEEVSMRINPDISNGVLFIGPNKTYKWLLPNDEEAKDWVNDFERTTILIYRNNPNGGGSNNNSIGGGGGGRGGSGNNSNNGSIDLTEINQIHHINNQAIPLSSSNNNITNNNSINNNIIMNNNNNNNKDTEGKGFIKRFRLSFSAGTSTPERKTSLVNMSPSTTSSLNNIDSNYNNNNNNVTNTPIKSVTSSPSIHYTPVNDNNQQPQLPSQPNEEFQFTVPTTPSDKKKKRGSFSSKLKRLSITFSKD.

One can recognise a Protein kinase domain in the interval 18–316 (LVFKDIIGKG…STIVTILESI (299 aa)). ATP is bound by residues 24-32 (IGKGNFGCV) and lysine 45. Aspartate 138 functions as the Proton acceptor in the catalytic mechanism. Disordered stretches follow at residues 169-201 (NGSD…KNNG), 360-426 (QQQS…TTTT), and 446-471 (PLSK…LIGS). Residues 451–471 (QQQQQRNQNSSIIDNNSLIGS) are compositionally biased toward low complexity. The 30-residue stretch at 650 to 679 (ELNLIIKLQSRIRGWLVRRRYKIFLSNWKL) folds into the IQ domain. The DH domain maps to 691–927 (QWIRLFNQLI…RETSNYIQSQ (237 aa)). Low complexity-rich tracts occupy residues 994–1021 (SKYN…TNSN) and 1031–1044 (STSN…GNNN). 3 disordered regions span residues 994–1044 (SKYN…GNNN), 1114–1145 (NNPN…NGSI), and 1208–1311 (GTST…FSKD). Positions 1117–1137 (NGGGSNNNSIGGGGGGRGGSG) are enriched in gly residues. Residues 1208–1229 (GTSTPERKTSLVNMSPSTTSSL) show a composition bias toward polar residues. A compositionally biased stretch (low complexity) spans 1230-1245 (NNIDSNYNNNNNNVTN). The span at 1246 to 1257 (TPIKSVTSSPSI) shows a compositional bias: polar residues. The segment covering 1263-1276 (NDNNQQPQLPSQPN) has biased composition (low complexity). Residues 1277–1287 (EEFQFTVPTTP) are compositionally biased toward polar residues. A compositionally biased stretch (basic residues) spans 1290 to 1303 (KKKKRGSFSSKLKR).

It belongs to the protein kinase superfamily. TKL Ser/Thr protein kinase family. Mg(2+) is required as a cofactor.

The enzyme catalyses L-seryl-[protein] + ATP = O-phospho-L-seryl-[protein] + ADP + H(+). It catalyses the reaction L-threonyl-[protein] + ATP = O-phospho-L-threonyl-[protein] + ADP + H(+). This Dictyostelium discoideum (Social amoeba) protein is Kinase and exchange factor for Rac A (kxcA).